The chain runs to 344 residues: Nuclear distribution protein nudE homolog 1 (344 aa).

The segment at 1–93 (MEDSGKTFGS…MQHSEGYRQI (93 aa)) is self-association. Residues 18–188 (WRDLAMTYKQ…ELAVQQKQDK (171 aa)) adopt a coiled-coil conformation. Residues 30 to 47 (ENTQEELREFQEGSREYE) show a composition bias toward basic and acidic residues. The disordered stretch occupies residues 30–65 (ENTQEELREFQEGSREYEAELETQLQQAETRNRDLL). An interaction with PAFAH1B1 region spans residues 88-156 (EGYRQISALE…ERNAFLESEL (69 aa)). The segment at 167-290 (QRLKDEARDL…QSPSRKSGPA (124 aa)) is interaction with CENPF. Residues 181-243 (AVQQKQDKPR…CGLGSPSSGT (63 aa)) form a disordered region. Positions 208 to 230 (ATGSAPSTPITHQGSSSGLNTPE) are enriched in polar residues. A Phosphoserine modification is found at serine 211. A phosphothreonine mark is found at threonine 215, threonine 228, threonine 243, and threonine 246. Residue cysteine 274 is the site of S-palmitoyl cysteine; by ZDHHC2, ZDHHC3 and ZDHHC7 attachment. A disordered region spans residues 279–337 (YDQSPSRKSGPALGRGTKNRDGIDRRPGSTAVGDKGSGKRLEFAKPSSQLSSPALPSTQ). Residue serine 282 is modified to Phosphoserine. Residues 296–305 (KNRDGIDRRP) show a composition bias toward basic and acidic residues. Residues 324–335 (PSSQLSSPALPS) are compositionally biased toward low complexity.

This sequence belongs to the nudE family. Homodimer. Interacts with CNTRL, LIS1, dynein, SLMAP and TCP1. Interacts with CENPF, dynactin, tubulin gamma, PAFAH1B1, PCM1 and PCNT. Interacts with ZNF365. Interacts with GTP-bound RAB9A and RAB9B; the interaction leads to RAB9-dynein motor tethering. Interacts (via C-terminus) with MCRS1 (via C-terminus); phosphorylation of NDE1 inhibits the interaction. Post-translationally, phosphorylated in mitosis. Phosphorylation at Thr-246 is essential for the G2/M transition. Expressed in brain, heart, kidney, liver, lung, skeletal muscle, spleen and testis.

It is found in the cytoplasm. Its subcellular location is the cytoskeleton. It localises to the microtubule organizing center. The protein localises to the centrosome. The protein resides in the spindle. It is found in the chromosome. Its subcellular location is the centromere. It localises to the kinetochore. The protein localises to the cleavage furrow. The protein resides in the cytoplasmic vesicle membrane. Required for centrosome duplication and formation and function of the mitotic spindle. Essential for the development of the cerebral cortex. May regulate the production of neurons by controlling the orientation of the mitotic spindle during division of cortical neuronal progenitors of the proliferative ventricular zone of the brain. Orientation of the division plane perpendicular to the layers of the cortex gives rise to two proliferative neuronal progenitors whereas parallel orientation of the division plane yields one proliferative neuronal progenitor and a postmitotic neuron. A premature shift towards a neuronal fate within the progenitor population may result in an overall reduction in the final number of neurons and an increase in the number of neurons in the deeper layers of the cortex. Acts as a RAB9A/B effector that tethers RAB9-associated late endosomes to the dynein motor for their retrograde transport to the trans-Golgi network. This is Nuclear distribution protein nudE homolog 1 from Rattus norvegicus (Rat).